We begin with the raw amino-acid sequence, 168 residues long: Photosystem I assembly protein Ycf3 (168 aa).

TPR repeat units lie at residues 35-68 (AFTY…EIDP), 72-105 (SYIL…NPFL), and 120-153 (GEQA…TPGN).

The protein belongs to the Ycf3 family.

Its subcellular location is the plastid. It is found in the chloroplast thylakoid membrane. Essential for the assembly of the photosystem I (PSI) complex. May act as a chaperone-like factor to guide the assembly of the PSI subunits. This is Photosystem I assembly protein Ycf3 from Illicium oligandrum (Star anise).